The chain runs to 416 residues: Polyadenylation and cleavage factor homolog 1 (416 aa).

Residues 1 to 17 show a composition bias toward polar residues; that stretch reads MASNGSFSAQRNANART. Positions 1–80 are disordered; sequence MASNGSFSAQ…NNNNVSRVSS (80 aa). Positions 70–80 are enriched in low complexity; that stretch reads SNNNNVSRVSS. Residues 199–220 adopt a coiled-coil conformation; the sequence is KELTDLLSLLNNEKEKKTLEAS. The C2H2-type zinc-finger motif lies at 254–276; it reads RQCSSCGLRFKCQEEHSKHMDWH.

In terms of assembly, forms a complex with cleavage and polyadenylation specificity factor (CPSF) subunits CLPS3, CLPS5, CPSF30, PCFS4, PCFS5, CSTF77 and FIPS3.

Its subcellular location is the nucleus. The chain is Polyadenylation and cleavage factor homolog 1 from Arabidopsis thaliana (Mouse-ear cress).